A 139-amino-acid polypeptide reads, in one-letter code: Small ribosomal subunit protein uS11A (139 aa).

Positions 119-139 (DVTPIPTDSTRRKGGRRGRRL) are disordered. Residues 130–139 (RKGGRRGRRL) show a composition bias toward basic residues.

The protein belongs to the universal ribosomal protein uS11 family. Component of the small ribosomal subunit (SSU). Mature yeast ribosomes consist of a small (40S) and a large (60S) subunit. The 40S small subunit contains 1 molecule of ribosomal RNA (18S rRNA) and at least 33 different proteins. The large 60S subunit contains 3 rRNA molecules (25S, 5.8S and 5S rRNA) and at least 46 different proteins. uS11 interacts with eS1 forming part of the mRNA exit tunnel. uS11 interacts with snoRNA U3. uS11 interacts with MPP10. Component of the ribosomal small subunit (SSU) processome composed of at least 40 protein subunits and snoRNA U3.

The protein localises to the cytoplasm. It is found in the nucleus. Its subcellular location is the nucleolus. Component of the ribosome, a large ribonucleoprotein complex responsible for the synthesis of proteins in the cell. The small ribosomal subunit (SSU) binds messenger RNAs (mRNAs) and translates the encoded message by selecting cognate aminoacyl-transfer RNA (tRNA) molecules. The large subunit (LSU) contains the ribosomal catalytic site termed the peptidyl transferase center (PTC), which catalyzes the formation of peptide bonds, thereby polymerizing the amino acids delivered by tRNAs into a polypeptide chain. The nascent polypeptides leave the ribosome through a tunnel in the LSU and interact with protein factors that function in enzymatic processing, targeting, and the membrane insertion of nascent chains at the exit of the ribosomal tunnel. uS11 is involved in nucleolar processing of pre-18S ribosomal RNA and ribosome assembly. The polypeptide is Small ribosomal subunit protein uS11A (rps1401) (Schizosaccharomyces pombe (strain 972 / ATCC 24843) (Fission yeast)).